A 310-amino-acid polypeptide reads, in one-letter code: ATP phosphoribosyltransferase (310 aa).

Belongs to the ATP phosphoribosyltransferase family.

The protein resides in the cytoplasm. The catalysed reaction is 1-(5-phospho-beta-D-ribosyl)-ATP + diphosphate = 5-phospho-alpha-D-ribose 1-diphosphate + ATP. It functions in the pathway amino-acid biosynthesis; L-histidine biosynthesis; L-histidine from 5-phospho-alpha-D-ribose 1-diphosphate: step 1/9. In terms of biological role, catalyzes the condensation of ATP and 5-phosphoribose 1-diphosphate to form N'-(5'-phosphoribosyl)-ATP (PR-ATP). Has a crucial role in the pathway because the rate of histidine biosynthesis seems to be controlled primarily by regulation of HisG enzymatic activity. The chain is ATP phosphoribosyltransferase (his1) from Schizosaccharomyces pombe (strain 972 / ATCC 24843) (Fission yeast).